A 42-amino-acid chain; its full sequence is Photosystem I reaction center subunit IX (42 aa).

The chain crosses the membrane as a helical span at residues 7–27; that stretch reads YLSVAPVLSTLWFVALAGLLI.

Belongs to the PsaJ family.

It localises to the plastid. Its subcellular location is the chloroplast thylakoid membrane. Its function is as follows. May help in the organization of the PsaE and PsaF subunits. This is Photosystem I reaction center subunit IX from Atropa belladonna (Belladonna).